We begin with the raw amino-acid sequence, 324 residues long: Beta-ketoacyl-[acyl-carrier-protein] synthase III (324 aa).

Catalysis depends on residues Cys116 and His251. An ACP-binding region spans residues 252-256; that stretch reads QANLR. Residue Asn281 is part of the active site.

It belongs to the thiolase-like superfamily. FabH family. In terms of assembly, homodimer.

The protein resides in the cytoplasm. It catalyses the reaction malonyl-[ACP] + acetyl-CoA + H(+) = 3-oxobutanoyl-[ACP] + CO2 + CoA. Its pathway is lipid metabolism; fatty acid biosynthesis. Its function is as follows. Catalyzes the condensation reaction of fatty acid synthesis by the addition to an acyl acceptor of two carbons from malonyl-ACP. Catalyzes the first condensation reaction which initiates fatty acid synthesis and may therefore play a role in governing the total rate of fatty acid production. Possesses both acetoacetyl-ACP synthase and acetyl transacylase activities. Its substrate specificity determines the biosynthesis of branched-chain and/or straight-chain of fatty acids. The sequence is that of Beta-ketoacyl-[acyl-carrier-protein] synthase III from Xylella fastidiosa (strain Temecula1 / ATCC 700964).